Reading from the N-terminus, the 531-residue chain is Aspartate--tRNA ligase, cytoplasmic (531 aa).

Residues 1-45 (MADAAEGEQPKLSKKELNKLARKAKKDEKAGEKGGNQQQAAAMDQ) form a disordered region. The segment covering 8–32 (EQPKLSKKELNKLARKAKKDEKAGE) has biased composition (basic and acidic residues). Glutamate 259 is an L-aspartate binding site. Residues 281-284 (QLYK) are aspartate. Arginine 303 lines the L-aspartate pocket. ATP contacts are provided by residues 303–305 (RAE), 311–313 (RHM), and glutamate 454. Positions 457 and 461 each coordinate L-aspartate. 502 to 505 (GLER) is a binding site for ATP.

The protein belongs to the class-II aminoacyl-tRNA synthetase family. Type 2 subfamily. In terms of assembly, homodimer.

It localises to the cytoplasm. The enzyme catalyses tRNA(Asp) + L-aspartate + ATP = L-aspartyl-tRNA(Asp) + AMP + diphosphate. The sequence is that of Aspartate--tRNA ligase, cytoplasmic from Caenorhabditis elegans.